A 244-amino-acid chain; its full sequence is tRNA (guanine-N(1)-)-methyltransferase (244 aa).

S-adenosyl-L-methionine is bound by residues glycine 120 and 140 to 145 (IGDYIL).

This sequence belongs to the RNA methyltransferase TrmD family. As to quaternary structure, homodimer.

The protein localises to the cytoplasm. The catalysed reaction is guanosine(37) in tRNA + S-adenosyl-L-methionine = N(1)-methylguanosine(37) in tRNA + S-adenosyl-L-homocysteine + H(+). Specifically methylates guanosine-37 in various tRNAs. This is tRNA (guanine-N(1)-)-methyltransferase from Brucella canis (strain ATCC 23365 / NCTC 10854 / RM-666).